A 492-amino-acid chain; its full sequence is MDTFQLLLAVGVCFWIYFLWSRRRLYMMHFKIPGPMGLPILGIAFEYLITYKRKMSIRTKYMDIYGSTCLVWVGPTPFVITRDPKIAEEIFLSPECLNRSSIFSKPVNSCTGDGLLSLEASKWVDRRKNLNPAFKQNVLLSFLPIFNSEAKTLVAFLDSLVGQGEKKVRDDIVRWSFRIATQTTVGTDVKKDASFKNDSVLKSYETFMKIIVMNVLLPFTHNKIFSTLGGFETQKALAKSNVNKMIGTIVDKKLMTKPESGSQPEITSVINKAIELHRNGEMSREEVQSECCSFVVAAFETTGDTVYHALILLAMFPEHQDTVYQELKELFPVAGDFEVTYDDLQRMVFLERVVNETLRLIPSVPFTPRETIRDFRLSSGVVIPKGVGIGIDIFATHRNRDHWGTDPSSFNPDHFLPDNVRDRHPYAYIPFSKGRRNCIGWKYGLMSSKLALSKILRNCKVSTSFRYEDLEFVDNIGMELAQSPGLEFHRRT.

C438 contributes to the heme binding site.

The protein belongs to the cytochrome P450 family. Heme is required as a cofactor.

The protein localises to the endoplasmic reticulum membrane. It is found in the microsome membrane. Functionally, may be involved in the metabolism of insect hormones and in the breakdown of synthetic insecticides. This is Probable cytochrome P450 313a3 (Cyp313a3) from Drosophila melanogaster (Fruit fly).